The sequence spans 345 residues: NADH-ubiquinone oxidoreductase chain 2 (345 aa).

The next 10 membrane-spanning stretches (helical) occupy residues 3 to 23, 25 to 45, 59 to 79, 95 to 115, 148 to 168, 177 to 196, 201 to 223, 236 to 256, 273 to 293, and 322 to 342; these read PYIL…TFAS, NWLL…PLMA, YFIT…INAW, ALMT…FWLP, LMPE…GWGG, IMAY…MHFM, IINL…TLNS, FPAL…LPPL, NLAL…YFYL, and FILP…PSII.

It belongs to the complex I subunit 2 family.

The protein resides in the mitochondrion inner membrane. The catalysed reaction is a ubiquinone + NADH + 5 H(+)(in) = a ubiquinol + NAD(+) + 4 H(+)(out). Functionally, core subunit of the mitochondrial membrane respiratory chain NADH dehydrogenase (Complex I) that is believed to belong to the minimal assembly required for catalysis. Complex I functions in the transfer of electrons from NADH to the respiratory chain. The immediate electron acceptor for the enzyme is believed to be ubiquinone. The polypeptide is NADH-ubiquinone oxidoreductase chain 2 (MT-ND2) (Polypterus ornatipinnis (Ornate bichir)).